The chain runs to 161 residues: S-ribosylhomocysteine lyase (161 aa).

The Fe cation site is built by H53, H57, and C124.

Belongs to the LuxS family. In terms of assembly, homodimer. Fe cation is required as a cofactor.

The catalysed reaction is S-(5-deoxy-D-ribos-5-yl)-L-homocysteine = (S)-4,5-dihydroxypentane-2,3-dione + L-homocysteine. Functionally, involved in the synthesis of autoinducer 2 (AI-2) which is secreted by bacteria and is used to communicate both the cell density and the metabolic potential of the environment. The regulation of gene expression in response to changes in cell density is called quorum sensing. Catalyzes the transformation of S-ribosylhomocysteine (RHC) to homocysteine (HC) and 4,5-dihydroxy-2,3-pentadione (DPD). This is S-ribosylhomocysteine lyase from Phocaeicola vulgatus (strain ATCC 8482 / DSM 1447 / JCM 5826 / CCUG 4940 / NBRC 14291 / NCTC 11154) (Bacteroides vulgatus).